Here is a 376-residue protein sequence, read N- to C-terminus: 23S rRNA (uracil(747)-C(5))-methyltransferase RlmC (376 aa).

[4Fe-4S] cluster is bound by residues cysteine 3, cysteine 11, cysteine 14, and cysteine 87. Positions 212, 241, 262, and 307 each coordinate S-adenosyl-L-methionine. Residue cysteine 334 is the Nucleophile of the active site.

It belongs to the class I-like SAM-binding methyltransferase superfamily. RNA M5U methyltransferase family. RlmC subfamily.

It catalyses the reaction uridine(747) in 23S rRNA + S-adenosyl-L-methionine = 5-methyluridine(747) in 23S rRNA + S-adenosyl-L-homocysteine + H(+). Functionally, catalyzes the formation of 5-methyl-uridine at position 747 (m5U747) in 23S rRNA. The sequence is that of 23S rRNA (uracil(747)-C(5))-methyltransferase RlmC from Yersinia pseudotuberculosis serotype I (strain IP32953).